A 72-amino-acid polypeptide reads, in one-letter code: MYKNPIKANLGEEVNNSLNYKDVSILSNFVNEQGKILPRRLTGLKSKQQKKVTKLIKQARIAALLPFVIGKN.

It belongs to the bacterial ribosomal protein bS18 family. Part of the 30S ribosomal subunit.

Its subcellular location is the plastid. The protein resides in the chloroplast. This is Small ribosomal subunit protein bS18c from Emiliania huxleyi (Coccolithophore).